A 212-amino-acid polypeptide reads, in one-letter code: ATP synthase subunit 5, mitochondrial (212 aa).

Residues 1–17 constitute a mitochondrion transit peptide; it reads MFNRVFTRSFASSLRAA.

Belongs to the ATPase delta chain family. In terms of assembly, F-type ATPases have 2 components, CF(1) - the catalytic core - and CF(0) - the membrane proton channel. CF(1) has five subunits: alpha(3), beta(3), gamma(1), delta(1), epsilon(1). CF(0) has three main subunits: a, b and c.

It is found in the mitochondrion. The protein resides in the mitochondrion inner membrane. In terms of biological role, mitochondrial membrane ATP synthase (F(1)F(0) ATP synthase or Complex V) produces ATP from ADP in the presence of a proton gradient across the membrane which is generated by electron transport complexes of the respiratory chain. F-type ATPases consist of two structural domains, F(1) - containing the extramembraneous catalytic core and F(0) - containing the membrane proton channel, linked together by a central stalk and a peripheral stalk. During catalysis, ATP synthesis in the catalytic domain of F(1) is coupled via a rotary mechanism of the central stalk subunits to proton translocation. Part of the complex F(0) domain and the peripheric stalk, which acts as a stator to hold the catalytic alpha(3)beta(3) subcomplex and subunit a/ATP6 static relative to the rotary elements. This Saccharomyces cerevisiae (strain ATCC 204508 / S288c) (Baker's yeast) protein is ATP synthase subunit 5, mitochondrial (ATP5).